The sequence spans 1035 residues: MASVFMCGVEDLLFSGSRFVWNLTVSTLRRWYTERLRACHQVLRTWCGLRDVYQMTEGRHCQVHLLDDRRLELLVQPKLLSRELLDLVASHFNLKEKEYFGITFIDDTGQENWLQLDHRVLEHDLPKKPGPTLLHFAVRFYIESISFLKDKNTVELFFLNAKACVHKGQIEVDSETIFKLAALVLQESKGDYTSDENARKDLKTLPVFPTKTLQEHPSLAYCEDRVIEHYLKIKGLTRGQAVVQYMKIVEALPTYGVHYYAVKDKQGLPWWLGISYKGIGQYDLQDKVKPRKLFQWKQLENLYFREKKFAVEVHDPRRISVSRRTFGQSGLFVQTWYANSSLIKSIWVMAISQHQFYLDRKQSKAKIPSARSLDDIAMDLTETGTQRGSKLVTLEAKSQFIMASNGSLISSGSQDSEGMEEQKREKILELKKKEKLLQEKLLQKVEELKKICLREAELTGRMPKEYPLNIGEKPPQVRRRVGTTFKLDDNLLPTEEDPALQELESNFLIQQKLVEAAKKLASEPDLCKTVKKKRKQDYTDAVKRLQEIENSINEYRIRCGKKPSQKAAVVPPEDIIPSESSSLSDTTTYDDPNDSFTLAGQRPSSVPHSPRILPPKSLGIERIHFRKSSINEQFMDTRHSREMLSTHSSPYKTLERRPQGGRSMPTTPVLTRNAYSSSHLEPDSSSQHCRQRSGSLESQSHLLSEMDSDKPFFTLSKSQRSSSTEILDDGSSYTSQSSSEYYCVTPAASPYYTTQTLDTRARGRRRSKKHSVSTSNSGSMPNLAQKDPLRNGVYSKGQDPPPSGYYIAGYPPYAECDLYYSGGYVYENDTEGQYSVNPSYRSSAHYGYDRQRDYSRSFHEDEVDRVPHNPYATLRLPRKAAVKSEHITKNIHKALVAEHLRGWYQRASGQKDQGHSPQTSFDSDRGSQRCLGFAGLQVPCSPSSRASSYSSVSSTNASGNWRTQLTIGLSEYENPVHSPYTSYYGSIYNPLSSPSRQYAETTPLDGTDGSQLEDNLEGSEQRLFWHEDSKPGTLV.

Positions 59 to 361 (RHCQVHLLDD…SQHQFYLDRK (303 aa)) constitute an FERM domain. Serine 372 is modified (phosphoserine). 2 coiled-coil regions span residues 414 to 451 (QDSE…LKKI) and 535 to 559 (KQDY…RIRC). Positions 542–972 (VKRLQEIENS…TQLTIGLSEY (431 aa)) are necessary for adherens junction and tight junction localization. Disordered stretches follow at residues 563–615 (PSQK…ILPP), 631–699 (NEQF…LESQ), 713–738 (FTLS…SQSS), and 754–798 (TQTL…SKGQ). The span at 571–590 (PPEDIIPSESSSLSDTTTYD) shows a compositional bias: low complexity. A compositionally biased stretch (polar residues) spans 594–607 (DSFTLAGQRPSSVP). Serine 609 carries the phosphoserine modification. The segment covering 635 to 644 (MDTRHSREML) has biased composition (basic and acidic residues). 2 stretches are compositionally biased toward polar residues: residues 664–699 (MPTT…LESQ) and 715–725 (LSKSQRSSSTE). Phosphoserine is present on serine 698. Basic residues predominate over residues 762 to 771 (RGRRRSKKHS). Over residues 772–782 (VSTSNSGSMPN) the composition is skewed to polar residues. Lysine 883 is covalently cross-linked (Glycyl lysine isopeptide (Lys-Gly) (interchain with G-Cter in SUMO2)). Disordered regions lie at residues 906-926 (RASG…SDRG), 939-958 (PCSP…TNAS), and 994-1035 (PSRQ…GTLV). Over residues 907 to 921 (ASGQKDQGHSPQTSF) the composition is skewed to polar residues. The residue at position 916 (serine 916) is a Phosphoserine. The span at 941-958 (SPSSRASSYSSVSSTNAS) shows a compositional bias: low complexity. Basic and acidic residues predominate over residues 1019-1035 (SEQRLFWHEDSKPGTLV). Residue lysine 1030 forms a Glycyl lysine isopeptide (Lys-Gly) (interchain with G-Cter in SUMO2) linkage.

Interacts with CYTH3. Interacts with PARD3. Interacts with CYTH1. In terms of tissue distribution, isoform 1 is expressed in the brain. Isoform 2 is expressed in the lung (at protein level).

It is found in the cytoplasm. It localises to the cytoskeleton. The protein resides in the cell junction. Its subcellular location is the tight junction. The protein localises to the adherens junction. Member of GRP1 signaling complexes that are acutely recruited to plasma membrane ruffles in response to insulin receptor signaling. May function as a scaffolding protein that regulates epithelial cell polarity by connecting ARF6 activation with the PAR3 complex. Plays a redundant role with FRMD4A in epithelial polarization. The protein is FERM domain-containing protein 4B (Frmd4b) of Mus musculus (Mouse).